The sequence spans 46 residues: Large ribosomal subunit protein bL34 (46 aa).

A disordered region spans residues 25-46; that stretch reads TASGRQVLRRRRAKGRYRLAVS. A compositionally biased stretch (basic residues) spans 31 to 46; sequence VLRRRRAKGRYRLAVS.

This sequence belongs to the bacterial ribosomal protein bL34 family.

The chain is Large ribosomal subunit protein bL34 from Synechococcus sp. (strain JA-3-3Ab) (Cyanobacteria bacterium Yellowstone A-Prime).